Consider the following 471-residue polypeptide: MKIKTRFAPSPTGYLHVGGARTALYSWLFARHHGGEFVLRIEDTDLERSTPEAIEAIMDGMNWLNLEWDEGPYFQTKRFDRYNAVIDEMLEAGTAYKCYCSKERLEQLREDQMAKGEKPRYDGRCRHSHEHHADDEPCVVRFANPQDGSVIFDDQIRGPIEFSNQELDDLIIRRTDGSPTYNFCVVVDDWDMEITHVIRGEDHINNTPRQINILKALNAPVPMYAHVSMINGDDGKKLSKRHGAVSVMQYRDDGYLPEALLNYLVRLGWSSGDQEIFTREEMIKLFSLGAVSKSASAFNTDKLLWLNHHYINTLAPEYVATHLQWHIEQENIDTRNGPQLAELVKLLGERCKTLKEMSQSCRYFYEDFSEFDADAAKKHLRPVARQPLEVVRDKLSAITDWSAENVHHAIQATADELEVGMGKVGMPLRVAVTGAGQSPALDVTVHAIGKTRSIERINKALGFIAERESQQ.

The short motif at 9 to 19 (PSPTGYLHVGG) is the 'HIGH' region element. The Zn(2+) site is built by cysteine 98, cysteine 100, cysteine 125, and histidine 127. Positions 237-241 (KLSKR) match the 'KMSKS' region motif. Lysine 240 serves as a coordination point for ATP.

The protein belongs to the class-I aminoacyl-tRNA synthetase family. Glutamate--tRNA ligase type 1 subfamily. Monomer. The cofactor is Zn(2+).

The protein resides in the cytoplasm. The catalysed reaction is tRNA(Glu) + L-glutamate + ATP = L-glutamyl-tRNA(Glu) + AMP + diphosphate. In terms of biological role, catalyzes the attachment of glutamate to tRNA(Glu) in a two-step reaction: glutamate is first activated by ATP to form Glu-AMP and then transferred to the acceptor end of tRNA(Glu). This Salmonella paratyphi A (strain ATCC 9150 / SARB42) protein is Glutamate--tRNA ligase.